A 229-amino-acid chain; its full sequence is Protein N-lysine methyltransferase METTL21D (229 aa).

Alanine 2 is subject to N-acetylalanine. Serine 8 carries the phosphoserine modification. S-adenosyl-L-methionine-binding positions include tryptophan 43, glycine 75 to glycine 77, aspartate 96, tryptophan 126, alanine 143, and tyrosine 148.

The protein belongs to the methyltransferase superfamily. METTL21 family. As to quaternary structure, interacts with ALKBH6. Interacts with ASPSCR1 and UBXN6; interaction with ASPSCR1, but not with UBXN6, enhances VCP methylation.

It is found in the cytoplasm. It carries out the reaction L-lysyl-[protein] + 3 S-adenosyl-L-methionine = N(6),N(6),N(6)-trimethyl-L-lysyl-[protein] + 3 S-adenosyl-L-homocysteine + 3 H(+). Protein N-lysine methyltransferase that specifically trimethylates 'Lys-315' of VCP/p97; this modification may decrease VCP ATPase activity. This chain is Protein N-lysine methyltransferase METTL21D (VCPKMT), found in Homo sapiens (Human).